Here is a 570-residue protein sequence, read N- to C-terminus: Putative ABC transporter ATP-binding protein SACOL2708 (570 aa).

ABC transporter domains follow at residues 6–247 and 304–537; these read ISFK…GIRE and LELN…ASLR. Residues 40–47 and 338–345 contribute to the ATP site; these read GASGSGKS and GHNGAGKS.

This sequence belongs to the ABC transporter superfamily.

It is found in the cell membrane. Probably part of an ABC transporter complex. Responsible for energy coupling to the transport system. In Staphylococcus aureus (strain COL), this protein is Putative ABC transporter ATP-binding protein SACOL2708.